The sequence spans 434 residues: Serine hydroxymethyltransferase (434 aa).

(6S)-5,6,7,8-tetrahydrofolate-binding positions include L132 and 136-138 (GHL). The residue at position 241 (K241) is an N6-(pyridoxal phosphate)lysine.

The protein belongs to the SHMT family. As to quaternary structure, homodimer. Pyridoxal 5'-phosphate serves as cofactor.

The protein localises to the cytoplasm. It catalyses the reaction (6R)-5,10-methylene-5,6,7,8-tetrahydrofolate + glycine + H2O = (6S)-5,6,7,8-tetrahydrofolate + L-serine. It participates in one-carbon metabolism; tetrahydrofolate interconversion. Its pathway is amino-acid biosynthesis; glycine biosynthesis; glycine from L-serine: step 1/1. Its function is as follows. Catalyzes the reversible interconversion of serine and glycine with tetrahydrofolate (THF) serving as the one-carbon carrier. This reaction serves as the major source of one-carbon groups required for the biosynthesis of purines, thymidylate, methionine, and other important biomolecules. Also exhibits THF-independent aldolase activity toward beta-hydroxyamino acids, producing glycine and aldehydes, via a retro-aldol mechanism. The polypeptide is Serine hydroxymethyltransferase (Nitrobacter hamburgensis (strain DSM 10229 / NCIMB 13809 / X14)).